We begin with the raw amino-acid sequence, 274 residues long: NH(3)-dependent NAD(+) synthetase (274 aa).

Position 46-53 (46-53) interacts with ATP; sequence GISGGQDS. Residue Asp52 participates in Mg(2+) binding. Arg140 contacts deamido-NAD(+). Thr160 contacts ATP. Residue Glu165 participates in Mg(2+) binding. Residues Lys173 and Asp180 each coordinate deamido-NAD(+). Residues Lys189 and Thr211 each contribute to the ATP site. A deamido-NAD(+)-binding site is contributed by 260–261; that stretch reads HK.

It belongs to the NAD synthetase family. As to quaternary structure, homodimer.

The catalysed reaction is deamido-NAD(+) + NH4(+) + ATP = AMP + diphosphate + NAD(+) + H(+). The protein operates within cofactor biosynthesis; NAD(+) biosynthesis; NAD(+) from deamido-NAD(+) (ammonia route): step 1/1. Its function is as follows. Catalyzes the ATP-dependent amidation of deamido-NAD to form NAD. Uses ammonia as a nitrogen source. This is NH(3)-dependent NAD(+) synthetase from Streptococcus equi subsp. zooepidemicus (strain H70).